The sequence spans 385 residues: Succinyl-diaminopimelate desuccinylase (385 aa).

His-78 provides a ligand contact to Zn(2+). The active site involves Asp-80. Asp-110 is a binding site for Zn(2+). The Proton acceptor role is filled by Glu-144. Zn(2+) contacts are provided by Glu-145, Glu-173, and His-358.

The protein belongs to the peptidase M20A family. DapE subfamily. Homodimer. Requires Zn(2+) as cofactor. It depends on Co(2+) as a cofactor.

The enzyme catalyses N-succinyl-(2S,6S)-2,6-diaminopimelate + H2O = (2S,6S)-2,6-diaminopimelate + succinate. Its pathway is amino-acid biosynthesis; L-lysine biosynthesis via DAP pathway; LL-2,6-diaminopimelate from (S)-tetrahydrodipicolinate (succinylase route): step 3/3. Functionally, catalyzes the hydrolysis of N-succinyl-L,L-diaminopimelic acid (SDAP), forming succinate and LL-2,6-diaminopimelate (DAP), an intermediate involved in the bacterial biosynthesis of lysine and meso-diaminopimelic acid, an essential component of bacterial cell walls. This is Succinyl-diaminopimelate desuccinylase from Gluconacetobacter diazotrophicus (strain ATCC 49037 / DSM 5601 / CCUG 37298 / CIP 103539 / LMG 7603 / PAl5).